Consider the following 114-residue polypeptide: Transmembrane protein 14C (114 aa).

4 consecutive transmembrane segments (helical) span residues 8–28 (LMPL…GGII), 33–53 (AGSV…GLGA), 63–83 (VWVF…RFYN), and 89–109 (PAGL…ISLL).

It belongs to the TMEM14 family.

It is found in the mitochondrion membrane. Its function is as follows. Required for normal heme biosynthesis. The protein is Transmembrane protein 14C (Tmem14c) of Mus musculus (Mouse).